A 296-amino-acid chain; its full sequence is 3-methyl-2-oxobutanoate hydroxymethyltransferase (296 aa).

Positions 1–33 (MDASDTPTHPAPHPADPAATPYGAPTTPPRPLR) are disordered. A compositionally biased stretch (low complexity) spans 16–25 (DPAATPYGAP). Mg(2+)-binding residues include aspartate 77 and aspartate 116. 3-methyl-2-oxobutanoate is bound by residues 77 to 78 (DS), aspartate 116, and lysine 146. Position 148 (glutamate 148) interacts with Mg(2+). The active-site Proton acceptor is glutamate 214.

The protein belongs to the PanB family. In terms of assembly, homodecamer; pentamer of dimers. The cofactor is Mg(2+).

Its subcellular location is the cytoplasm. The enzyme catalyses 3-methyl-2-oxobutanoate + (6R)-5,10-methylene-5,6,7,8-tetrahydrofolate + H2O = 2-dehydropantoate + (6S)-5,6,7,8-tetrahydrofolate. The protein operates within cofactor biosynthesis; (R)-pantothenate biosynthesis; (R)-pantoate from 3-methyl-2-oxobutanoate: step 1/2. Catalyzes the reversible reaction in which hydroxymethyl group from 5,10-methylenetetrahydrofolate is transferred onto alpha-ketoisovalerate to form ketopantoate. In Frankia casuarinae (strain DSM 45818 / CECT 9043 / HFP020203 / CcI3), this protein is 3-methyl-2-oxobutanoate hydroxymethyltransferase.